Reading from the N-terminus, the 455-residue chain is Glutamate-1-semialdehyde 2,1-aminomutase (455 aa).

At K286 the chain carries N6-(pyridoxal phosphate)lysine.

Belongs to the class-III pyridoxal-phosphate-dependent aminotransferase family. HemL subfamily. Homodimer. It depends on pyridoxal 5'-phosphate as a cofactor.

The protein localises to the cytoplasm. The enzyme catalyses (S)-4-amino-5-oxopentanoate = 5-aminolevulinate. It functions in the pathway porphyrin-containing compound metabolism; protoporphyrin-IX biosynthesis; 5-aminolevulinate from L-glutamyl-tRNA(Glu): step 2/2. This chain is Glutamate-1-semialdehyde 2,1-aminomutase, found in Clavibacter sepedonicus (Clavibacter michiganensis subsp. sepedonicus).